The following is a 431-amino-acid chain: Putative serine/threonine-protein kinase B (431 aa).

A Protein kinase domain is found at 20 to 279; that stretch reads YLNKGIVGLG…VRENFQIPYI (260 aa). ATP-binding positions include 26–34 and Lys-49; that span reads VGLGSYGEG. Catalysis depends on Asp-147, which acts as the Proton acceptor. Residues 331 to 429 form the PH domain; the sequence is DVTHRGHVNK…WVHAIQRGIG (99 aa).

The protein belongs to the protein kinase superfamily. Ser/Thr protein kinase family.

It carries out the reaction L-seryl-[protein] + ATP = O-phospho-L-seryl-[protein] + ADP + H(+). The enzyme catalyses L-threonyl-[protein] + ATP = O-phospho-L-threonyl-[protein] + ADP + H(+). The chain is Putative serine/threonine-protein kinase B (NRKB) from Trypanosoma brucei brucei.